Reading from the N-terminus, the 244-residue chain is Phosphoadenosine 5'-phosphosulfate reductase (244 aa).

The Nucleophile; cysteine thiosulfonate intermediate role is filled by C239.

Belongs to the PAPS reductase family. CysH subfamily.

It localises to the cytoplasm. It catalyses the reaction [thioredoxin]-disulfide + sulfite + adenosine 3',5'-bisphosphate + 2 H(+) = [thioredoxin]-dithiol + 3'-phosphoadenylyl sulfate. It participates in sulfur metabolism; hydrogen sulfide biosynthesis; sulfite from sulfate: step 3/3. Catalyzes the formation of sulfite from phosphoadenosine 5'-phosphosulfate (PAPS) using thioredoxin as an electron donor. In Shigella boydii serotype 4 (strain Sb227), this protein is Phosphoadenosine 5'-phosphosulfate reductase.